Reading from the N-terminus, the 300-residue chain is Cation-efflux pump FieF (300 aa).

Helical transmembrane passes span 12–32 (AAIA…FAWW), 39–59 (ILAA…NLLV), 82–102 (AALA…LTGI), 114–134 (PGVG…LVSF), 151–171 (MLHY…LALS), and 172–192 (WYGW…YILY). Positions 45 and 49 each coordinate Zn(2+). The Zn(2+) site is built by His153 and Asp157.

This sequence belongs to the cation diffusion facilitator (CDF) transporter (TC 2.A.4) family. FieF subfamily. Homodimer.

The protein localises to the cell inner membrane. It carries out the reaction Zn(2+)(in) + H(+)(out) = Zn(2+)(out) + H(+)(in). The catalysed reaction is Cd(2+)(in) + H(+)(out) = Cd(2+)(out) + H(+)(in). It catalyses the reaction Fe(2+)(in) + H(+)(out) = Fe(2+)(out) + H(+)(in). Its function is as follows. Divalent metal cation transporter which exports Zn(2+), Cd(2+) and possibly Fe(2+). May be involved in zinc and iron detoxification by efflux. This is Cation-efflux pump FieF from Escherichia fergusonii (strain ATCC 35469 / DSM 13698 / CCUG 18766 / IAM 14443 / JCM 21226 / LMG 7866 / NBRC 102419 / NCTC 12128 / CDC 0568-73).